Consider the following 231-residue polypeptide: MKRAVVVFSGGQDSTTCLAQALHQYDEVHCVTFDYGQRHRAEIDVARSLALKLGVRAHKMLDVTLLNELAVSSLTRDSIPVPDYEPNADGIPNTFVPGRNILFLTLAAIYAYQVKAEAVITGVCETDFSGYPDCRDEFVKALNRAVNLGMAKDIRFETPLMWLDKAETWALADYWGKLNLVREETLTCYNGIKGDGCGHCAACNLRANGLNHYLADKAAVVTAMKQKTGLQ.

Residue 8-18 coordinates ATP; that stretch reads FSGGQDSTTCL. Cysteine 188, cysteine 197, cysteine 200, and cysteine 203 together coordinate Zn(2+).

The protein belongs to the QueC family. Zn(2+) serves as cofactor.

It carries out the reaction 7-carboxy-7-deazaguanine + NH4(+) + ATP = 7-cyano-7-deazaguanine + ADP + phosphate + H2O + H(+). It participates in purine metabolism; 7-cyano-7-deazaguanine biosynthesis. In terms of biological role, catalyzes the ATP-dependent conversion of 7-carboxy-7-deazaguanine (CDG) to 7-cyano-7-deazaguanine (preQ(0)). The polypeptide is 7-cyano-7-deazaguanine synthase (Salmonella arizonae (strain ATCC BAA-731 / CDC346-86 / RSK2980)).